A 518-amino-acid polypeptide reads, in one-letter code: T-box transcription factor TBX5 (518 aa).

The disordered stretch occupies residues 1–46; that stretch reads MADTDEGFGLARTPLEPDSKDRSCDSKPESALGAPSKSPSSPQAAF. The segment covering 15–28 has biased composition (basic and acidic residues); the sequence is LEPDSKDRSCDSKP. A compositionally biased stretch (low complexity) spans 34–45; sequence APSKSPSSPQAA. Positions 58-238 form a DNA-binding region, T-box; it reads LHERELWLKF…NNPFAKGFRG (181 aa). Disordered regions lie at residues 254 to 307 and 330 to 352; these read EYPV…LLPP and ECSSTEHPYKKPYMETSPSEEDT. Positions 269–301 are enriched in polar residues; it reads SNHSPFSSETRALSTSSNLGSQYQCENGVSGPS. K339 bears the N6-acetyllysine mark.

Monomer. Homodimer (via the T-box); binds DNA as homodimer. Interacts (via the T-box) with NKX2-5 (via the homeobox); this complex binds DNA. Interacts with GATA4. Interacts with KAT2A and KAT2B. In terms of processing, acetylation at Lys-339 by KAT2A and KAT2B promotes nuclear retention.

It is found in the nucleus. It localises to the cytoplasm. Its function is as follows. DNA-binding protein that regulates the transcription of several genes and is involved in heart development and limb pattern formation. Binds to the core DNA motif of NPPA promoter. The chain is T-box transcription factor TBX5 (Tbx5) from Mus musculus (Mouse).